We begin with the raw amino-acid sequence, 153 residues long: Glucose-6-phosphate 1-dehydrogenase (153 aa).

The NADP(+) site is built by R21 and K120. K120 provides a ligand contact to D-glucose 6-phosphate.

The protein belongs to the glucose-6-phosphate dehydrogenase family.

Its subcellular location is the cytoplasm. It is found in the cytosol. The enzyme catalyses D-glucose 6-phosphate + NADP(+) = 6-phospho-D-glucono-1,5-lactone + NADPH + H(+). Its pathway is carbohydrate degradation; pentose phosphate pathway; D-ribulose 5-phosphate from D-glucose 6-phosphate (oxidative stage): step 1/3. Cytosolic glucose-6-phosphate dehydrogenase that catalyzes the first and rate-limiting step of the oxidative branch within the pentose phosphate pathway/shunt, an alternative route to glycolysis for the dissimilation of carbohydrates and a major source of reducing power and metabolic intermediates for fatty acid and nucleic acid biosynthetic processes. The sequence is that of Glucose-6-phosphate 1-dehydrogenase (ZW) from Hyalophora cecropia (Cecropia moth).